The sequence spans 259 residues: Dihydroorotate dehydrogenase B (NAD(+)), electron transfer subunit (259 aa).

Residues 2–102 (MQKQNMIVVN…LGPLGHGFPV (101 aa)) form the FAD-binding FR-type domain. FAD is bound by residues 53–56 (RPIS), 70–72 (LYR), and 77–78 (GT). The [2Fe-2S] cluster site is built by Cys221, Cys226, Cys229, and Cys246.

It belongs to the PyrK family. As to quaternary structure, heterotetramer of 2 PyrK and 2 PyrD type B subunits. It depends on [2Fe-2S] cluster as a cofactor. Requires FAD as cofactor.

Its pathway is pyrimidine metabolism; UMP biosynthesis via de novo pathway; orotate from (S)-dihydroorotate (NAD(+) route): step 1/1. Responsible for channeling the electrons from the oxidation of dihydroorotate from the FMN redox center in the PyrD type B subunit to the ultimate electron acceptor NAD(+). The polypeptide is Dihydroorotate dehydrogenase B (NAD(+)), electron transfer subunit (Bacillus cereus (strain ZK / E33L)).